Reading from the N-terminus, the 278-residue chain is Indole-3-glycerol phosphate synthase (278 aa).

The protein belongs to the TrpC family.

The enzyme catalyses 1-(2-carboxyphenylamino)-1-deoxy-D-ribulose 5-phosphate + H(+) = (1S,2R)-1-C-(indol-3-yl)glycerol 3-phosphate + CO2 + H2O. The protein operates within amino-acid biosynthesis; L-tryptophan biosynthesis; L-tryptophan from chorismate: step 4/5. This chain is Indole-3-glycerol phosphate synthase, found in Pseudomonas aeruginosa (strain LESB58).